The sequence spans 328 residues: Malate dehydrogenase (328 aa).

12–18 is a binding site for NAD(+); sequence GAAGQIA. Arg-93 and Arg-99 together coordinate substrate. Residues Asn-106, Gln-113, and 130–132 contribute to the NAD(+) site; that span reads VGN. Positions 132 and 163 each coordinate substrate. His-188 acts as the Proton acceptor in catalysis.

The protein belongs to the LDH/MDH superfamily. MDH type 2 family.

It carries out the reaction (S)-malate + NAD(+) = oxaloacetate + NADH + H(+). Catalyzes the reversible oxidation of malate to oxaloacetate. The polypeptide is Malate dehydrogenase (Burkholderia lata (strain ATCC 17760 / DSM 23089 / LMG 22485 / NCIMB 9086 / R18194 / 383)).